Consider the following 464-residue polypeptide: JmjC domain-containing protein 1 (464 aa).

Residues 182–349 form the JmjC domain; the sequence is LYAKDMHLFR…QMYTALKEQY (168 aa).

This chain is JmjC domain-containing protein 1 (jmj1), found in Schizosaccharomyces pombe (strain 972 / ATCC 24843) (Fission yeast).